The following is a 547-amino-acid chain: MAAKDVKFGNDARVKMLRGVNVLADAVKVTLGPKGRNVVLDKSFGAPVITKDGVSVAREIELEDKFENMGAQMVKEVASKANDSAGDGTTTATVLAQSIVNEGLKAVAAGMNPMDLKRGIDKAVVAAVEELKKLSVPCSDPKAIAQVGTISANSDETVGKLIAQAMDKVGKEGVITVEEGSGLQDELDVVEGMQFDRGYLSPYFVNKPESGTVELEHPFILLADKKISNIREMLPILESVAKSGKPLLIIAEDVEGEALATLVVNNMRGIVKVTAVKAPGFGDRRKAMLQDIAILTSGTVISEEIGLELEKATLEDMGQAKRVLITKDATTIIDGVGNKSSIDSRVAQINQQRDEATSDYDREKLQERVAKLAGGVAVIKVGAATEVEMKEKKARVEDALHATRAAVEEGVVAGGGVALIRVANAIRNLCGDNEDQNVGIKVARRAMEAPLRQIMANAGEEPSVIANNVRSGEGNTGYNAATEKYGNMIELGILDPTKVTRSALQYAASIAGLMITTECMVTELPKEDKPDLGGGNPGGAGGMGGMM.

ATP is bound by residues 30–33, Lys51, 87–91, Gly415, 479–481, and Asp495; these read TLGP, DGTTT, and NAA. The interval 525 to 547 is disordered; sequence PKEDKPDLGGGNPGGAGGMGGMM. Positions 532-547 are enriched in gly residues; that stretch reads LGGGNPGGAGGMGGMM.

This sequence belongs to the chaperonin (HSP60) family. In terms of assembly, forms a cylinder of 14 subunits composed of two heptameric rings stacked back-to-back. Interacts with the co-chaperonin GroES.

The protein localises to the cytoplasm. It catalyses the reaction ATP + H2O + a folded polypeptide = ADP + phosphate + an unfolded polypeptide.. Functionally, together with its co-chaperonin GroES, plays an essential role in assisting protein folding. The GroEL-GroES system forms a nano-cage that allows encapsulation of the non-native substrate proteins and provides a physical environment optimized to promote and accelerate protein folding. The protein is Chaperonin GroEL of Blochmanniella floridana.